We begin with the raw amino-acid sequence, 481 residues long: MTQYTLKQASVLLQSKQISAVELASAYLAAIAEKNPALNGYITIDQDKTLAEARAADERIAQGNASALTGVPVAYKDIFCQTGWRSACASKMLDNFISPYTATVVQNLLDEGMVTLGRTNMDEFAMGSTNENSFYGAAKNPWNLEHVPGGSSGGSAAVVAARLAPAALGSDTGGSIRQPASHCGITGIKPTYGTVSRFGMVAYASSFDQTGPMAQTAEDCAILLNAMAGFDPKDSTSLEREKEDYTRDLNQPLKGLKIGLPKEYFGEGNSADVLTALQNTIDLLKAQGAELIEVSLPQTKLSIPAYYVLASAEASTNLSRYDGVRYGHRAAQFADLEEMYGKTRAEGFGSEVKRRIMIGTYVLSHGYYDAYYLKAQKLRRLVADDFQTAFARCDLILAPTAPTAAPKIGADASPVETYLSDIYTIAVNLAGLPALTLPAGFSGGGLPVGVQLVGNYFAEAKILGAAHQIQLNSDWHGKRPE.

Catalysis depends on charge relay system residues lysine 76 and serine 151. Residue serine 175 is the Acyl-ester intermediate of the active site.

This sequence belongs to the amidase family. GatA subfamily. In terms of assembly, heterotrimer of A, B and C subunits.

The enzyme catalyses L-glutamyl-tRNA(Gln) + L-glutamine + ATP + H2O = L-glutaminyl-tRNA(Gln) + L-glutamate + ADP + phosphate + H(+). In terms of biological role, allows the formation of correctly charged Gln-tRNA(Gln) through the transamidation of misacylated Glu-tRNA(Gln) in organisms which lack glutaminyl-tRNA synthetase. The reaction takes place in the presence of glutamine and ATP through an activated gamma-phospho-Glu-tRNA(Gln). In Neisseria meningitidis serogroup B (strain ATCC BAA-335 / MC58), this protein is Glutamyl-tRNA(Gln) amidotransferase subunit A.